The sequence spans 57 residues: Granulin-1 (57 aa).

2 cysteine pairs are disulfide-bonded: Cys-4/Cys-16 and Cys-10/Cys-26.

This sequence belongs to the granulin family. In terms of processing, granulins are disulfide bridged. As to expression, ubiquitous.

It localises to the secreted. Functionally, granulins have possible cytokine-like activity. They may play a role in inflammation, wound repair, and tissue remodeling. In Cyprinus carpio (Common carp), this protein is Granulin-1.